The chain runs to 373 residues: MPLINLPDFANDLIAEFVERNAERIDTPVIQPAEPFLDIAGEDLRRRIFMTESETGASLCLRPEFTIPVCLRHIETATGTPKRYAYLGEVFRQRRDGANEFYQAGIEDLGDIDLSNADARAIGDATGILARLLPGRHLAVTLGDQAVFEAVVQALGLPLGWQKRLIHAFGNMTQLEALLASLVSPQFVTGLDDDIARLVASGDEQALVAHLEREMQKTGYSTNAGRSALEIARRLKEKLILSETRLDDAAFHVLEEFLSLDVPLVNASAALSGFADAAGLKLGNALSRFNGRVAALSNAGVDLSCLDYRAAFGRPLDYYTGLVFEVTVEGSTAVLAGGGRFDRLLTFLGATDRIPAVGFSFWLDRIETERAAA.

The protein belongs to the class-II aminoacyl-tRNA synthetase family. HisZ subfamily. Heteromultimer composed of HisG and HisZ subunits.

It is found in the cytoplasm. The protein operates within amino-acid biosynthesis; L-histidine biosynthesis; L-histidine from 5-phospho-alpha-D-ribose 1-diphosphate: step 1/9. Its function is as follows. Required for the first step of histidine biosynthesis. May allow the feedback regulation of ATP phosphoribosyltransferase activity by histidine. This chain is ATP phosphoribosyltransferase regulatory subunit, found in Rhizobium johnstonii (strain DSM 114642 / LMG 32736 / 3841) (Rhizobium leguminosarum bv. viciae).